A 394-amino-acid chain; its full sequence is DNA replication and repair protein RecF (394 aa).

30–37 (GRNGFGKT) is a binding site for ATP.

Belongs to the RecF family.

The protein resides in the cytoplasm. In terms of biological role, the RecF protein is involved in DNA metabolism; it is required for DNA replication and normal SOS inducibility. RecF binds preferentially to single-stranded, linear DNA. It also seems to bind ATP. This Corynebacterium glutamicum (strain R) protein is DNA replication and repair protein RecF.